We begin with the raw amino-acid sequence, 251 residues long: Short chain dehydrogenase gsfK (251 aa).

NADP(+)-binding residues include L14, T33, E60, N88, and K122. Active-site proton donor residues include S143 and Y161. NADP(+) is bound by residues Y161, K165, V192, and T194. K165 (lowers pKa of active site Tyr) is an active-site residue.

Belongs to the short-chain dehydrogenases/reductases (SDR) family.

Its pathway is secondary metabolite biosynthesis; terpenoid biosynthesis. In terms of biological role, short chain dehydrogenase; part of the gene cluster that mediates the biosynthesis of griseofulvin, an important antifungal drug that has been in use for a long time for treating dermatophyte infections. The first step of the pathway is the formation of the heptaketide backbone by gsfA which is initiated by priming with acetyl-CoA, followed by sequential condensations of 6 malonyl-CoA units. The resulting benzophenone can undergo a spontaneous dehydration to form norlichexanthone. However, the true precursor for the griseofulvin biosynthesis is not norlichexanthone, but the heptaketide benzophenone that is O-methylated at 3-OH by gsfB to produce griseophenone D which is further methylated at 9-OH by gsfC to yield griseophenone C. Griseophenone C is then substrate of halogenase gsfI which is responsible for the regio-specific chlorination at the C13 position to form griseophenone B. The cytochrome P450 gsfF catalyzes the coupling of orcinol and phloroglucinol rings in griseophenone B to form desmethyl-dehydrogriseofulvin A which is further methylated at 5-OH by gsfD to yield dehydrogriseofulvin. Finally, gsfE performs stereospecific reduction of enone 18 of dehydrogriseofulvin to afford the final product griseofulvin. The exact role of gsfK within the pathway has not been identified yet. This chain is Short chain dehydrogenase gsfK, found in Penicillium aethiopicum.